Consider the following 337-residue polypeptide: Nodulation protein D 2 (337 aa).

An HTH lysR-type domain is found at 6-63 (LDLNLLVVLDSLMTARNLTAAARSINLSQPAMSAAVARLRAYFGDELFTMRGRTLVPT). A DNA-binding region (H-T-H motif) is located at residues 23-42 (LTAAARSINLSQPAMSAAVA).

It belongs to the LysR transcriptional regulatory family.

NodD regulates the expression of the nodABCFE genes which encode other nodulation proteins. NodD is also a negative regulator of its own expression. Binds flavonoids as inducers. The sequence is that of Nodulation protein D 2 (nodD2) from Bradyrhizobium sp. (strain NC92).